Consider the following 220-residue polypeptide: UPF0711 protein C18orf21 (220 aa).

Positions 117–181 (SRSFVSTLKS…VSTCSSKNTS (65 aa)) are disordered. The span at 119 to 136 (SFVSTLKSNPATPTSKLS) shows a compositional bias: polar residues. At Ser126 the chain carries Phosphoserine. Phosphothreonine is present on residues Thr130 and Thr139. The segment covering 171–180 (SVSTCSSKNT) has biased composition (low complexity).

Belongs to the UPF0711 family.

The chain is UPF0711 protein C18orf21 (C18orf21) from Homo sapiens (Human).